A 336-amino-acid chain; its full sequence is NADH-quinone oxidoreductase subunit H (336 aa).

8 consecutive transmembrane segments (helical) span residues 14-34, 82-102, 115-135, 161-181, 186-206, 247-267, 273-293, and 312-332; these read IIVAQILALMVPILVSVAFLV, IIFLAAPMLTMMLALAAWAVI, VGILYLLAISSQGVYGIIMAG, IGLVIITVLLCVGSLNLSDVV, TVWFAIPLLPMFVIFFISALA, ILMSAMTSVLFLGGWLPPLDV, VPGPIWFILKICFCLFLFVWV, and VFLPFSLVWVILTAGVLVTFD.

Belongs to the complex I subunit 1 family. NDH-1 is composed of 14 different subunits. Subunits NuoA, H, J, K, L, M, N constitute the membrane sector of the complex.

It is found in the cell inner membrane. It catalyses the reaction a quinone + NADH + 5 H(+)(in) = a quinol + NAD(+) + 4 H(+)(out). NDH-1 shuttles electrons from NADH, via FMN and iron-sulfur (Fe-S) centers, to quinones in the respiratory chain. The immediate electron acceptor for the enzyme in this species is believed to be ubiquinone. Couples the redox reaction to proton translocation (for every two electrons transferred, four hydrogen ions are translocated across the cytoplasmic membrane), and thus conserves the redox energy in a proton gradient. This subunit may bind ubiquinone. The polypeptide is NADH-quinone oxidoreductase subunit H (Rhodospirillum centenum (strain ATCC 51521 / SW)).